A 341-amino-acid polypeptide reads, in one-letter code: Methionine import ATP-binding protein MetN 1 (341 aa).

Positions 2 to 241 constitute an ABC transporter domain; that stretch reads IEFRQVSKTF…PKTTIAQNFV (240 aa). ATP is bound at residue 38 to 45; sequence GYSGAGKS.

The protein belongs to the ABC transporter superfamily. Methionine importer (TC 3.A.1.24) family. As to quaternary structure, the complex is composed of two ATP-binding proteins (MetN), two transmembrane proteins (MetI) and a solute-binding protein (MetQ).

The protein localises to the cell membrane. The enzyme catalyses L-methionine(out) + ATP + H2O = L-methionine(in) + ADP + phosphate + H(+). The catalysed reaction is D-methionine(out) + ATP + H2O = D-methionine(in) + ADP + phosphate + H(+). Its function is as follows. Part of the ABC transporter complex MetNIQ involved in methionine import. Responsible for energy coupling to the transport system. The sequence is that of Methionine import ATP-binding protein MetN 1 from Staphylococcus aureus (strain USA300).